A 456-amino-acid polypeptide reads, in one-letter code: 3-isopropylmalate dehydratase large subunit (456 aa).

Residues Cys-336, Cys-396, and Cys-399 each coordinate [4Fe-4S] cluster.

The protein belongs to the aconitase/IPM isomerase family. LeuC type 1 subfamily. Heterodimer of LeuC and LeuD. Requires [4Fe-4S] cluster as cofactor.

It catalyses the reaction (2R,3S)-3-isopropylmalate = (2S)-2-isopropylmalate. It participates in amino-acid biosynthesis; L-leucine biosynthesis; L-leucine from 3-methyl-2-oxobutanoate: step 2/4. Its function is as follows. Catalyzes the isomerization between 2-isopropylmalate and 3-isopropylmalate, via the formation of 2-isopropylmaleate. This is 3-isopropylmalate dehydratase large subunit from Staphylococcus saprophyticus subsp. saprophyticus (strain ATCC 15305 / DSM 20229 / NCIMB 8711 / NCTC 7292 / S-41).